The sequence spans 349 residues: Hydroxymethylglutaryl-CoA synthase (349 aa).

Residues aspartate 29 and alanine 30 each coordinate (3S)-3-hydroxy-3-methylglutaryl-CoA. Glutamate 81 functions as the Proton donor/acceptor in the catalytic mechanism. Cysteine 113 and threonine 154 together coordinate (3S)-3-hydroxy-3-methylglutaryl-CoA. The active-site Acyl-thioester intermediate is cysteine 113. Arginine 202 is a CoA binding site. The (3S)-3-hydroxy-3-methylglutaryl-CoA site is built by threonine 204 and histidine 237. Histidine 237 serves as the catalytic Proton donor/acceptor. CoA is bound at residue lysine 242. Residues lysine 246, asparagine 269, and serine 299 each contribute to the (3S)-3-hydroxy-3-methylglutaryl-CoA site.

The protein belongs to the thiolase-like superfamily. Archaeal HMG-CoA synthase family. As to quaternary structure, interacts with acetoacetyl-CoA thiolase that catalyzes the precedent step in the pathway and with a DUF35 protein. The acetoacetyl-CoA thiolase/HMG-CoA synthase complex channels the intermediate via a fused CoA-binding site, which allows for efficient coupling of the endergonic thiolase reaction with the exergonic HMGCS reaction.

It carries out the reaction acetoacetyl-CoA + acetyl-CoA + H2O = (3S)-3-hydroxy-3-methylglutaryl-CoA + CoA + H(+). The protein operates within metabolic intermediate biosynthesis; (R)-mevalonate biosynthesis; (R)-mevalonate from acetyl-CoA: step 2/3. Functionally, catalyzes the condensation of acetyl-CoA with acetoacetyl-CoA to form 3-hydroxy-3-methylglutaryl-CoA (HMG-CoA). Functions in the mevalonate (MVA) pathway leading to isopentenyl diphosphate (IPP), a key precursor for the biosynthesis of isoprenoid compounds that are building blocks of archaeal membrane lipids. The sequence is that of Hydroxymethylglutaryl-CoA synthase from Methanosarcina mazei (strain ATCC BAA-159 / DSM 3647 / Goe1 / Go1 / JCM 11833 / OCM 88) (Methanosarcina frisia).